A 332-amino-acid chain; its full sequence is MEYRVTDIITLLNAEYKGEVVEKVSKLSPFFHSDEKSLTFAADEKFLKNLSQTKAKVIIVPDIDLPLIEGKGYIVVKDSPRVIMPKLLHFFSRNLKKIEKMREDSAKIGENVDIAPNVYIGHDVVIGNNVKIFPNVTIGEGSIIGDGTVIYSNVSIREFVEIGKNCVIQPGAVIGSDGFGFVKVNGNNTKIDQIGTVIVEDEVEIGANTTIDRGAIGDTIIKKYTKIDNLVQIAHNDIIGENCLIISQVGIAGSTTIGNNVTLAGQVGVAGHLEIGDNTMIGAQSGVPGNVEANKILSGHPLVDHREDMKIRVAMKKLPELLKRVKALEEKK.

The active-site Proton acceptor is His235.

This sequence belongs to the transferase hexapeptide repeat family. LpxD subfamily. As to quaternary structure, homotrimer.

It carries out the reaction a UDP-3-O-[(3R)-3-hydroxyacyl]-alpha-D-glucosamine + a (3R)-hydroxyacyl-[ACP] = a UDP-2-N,3-O-bis[(3R)-3-hydroxyacyl]-alpha-D-glucosamine + holo-[ACP] + H(+). Its pathway is bacterial outer membrane biogenesis; LPS lipid A biosynthesis. Catalyzes the N-acylation of UDP-3-O-acylglucosamine using 3-hydroxyacyl-ACP as the acyl donor. Is involved in the biosynthesis of lipid A, a phosphorylated glycolipid that anchors the lipopolysaccharide to the outer membrane of the cell. In Fusobacterium nucleatum subsp. nucleatum (strain ATCC 25586 / DSM 15643 / BCRC 10681 / CIP 101130 / JCM 8532 / KCTC 2640 / LMG 13131 / VPI 4355), this protein is UDP-3-O-acylglucosamine N-acyltransferase.